Here is a 425-residue protein sequence, read N- to C-terminus: 3-phosphoshikimate 1-carboxyvinyltransferase (425 aa).

Residues Lys22, Ser23, and Arg27 each coordinate 3-phosphoshikimate. Lys22 is a binding site for phosphoenolpyruvate. Residues Gly95 and Arg123 each contribute to the phosphoenolpyruvate site. 3-phosphoshikimate-binding residues include Ser169, Ser170, Gln171, Ser197, Asp313, Asn336, and Lys340. Position 171 (Gln171) interacts with phosphoenolpyruvate. The Proton acceptor role is filled by Asp313. Arg344, Arg386, and Lys411 together coordinate phosphoenolpyruvate.

The protein belongs to the EPSP synthase family. As to quaternary structure, monomer.

Its subcellular location is the cytoplasm. The catalysed reaction is 3-phosphoshikimate + phosphoenolpyruvate = 5-O-(1-carboxyvinyl)-3-phosphoshikimate + phosphate. It participates in metabolic intermediate biosynthesis; chorismate biosynthesis; chorismate from D-erythrose 4-phosphate and phosphoenolpyruvate: step 6/7. In terms of biological role, catalyzes the transfer of the enolpyruvyl moiety of phosphoenolpyruvate (PEP) to the 5-hydroxyl of shikimate-3-phosphate (S3P) to produce enolpyruvyl shikimate-3-phosphate and inorganic phosphate. This Pseudoalteromonas translucida (strain TAC 125) protein is 3-phosphoshikimate 1-carboxyvinyltransferase.